The primary structure comprises 130 residues: Flagellar assembly factor FliW (130 aa).

It belongs to the FliW family. In terms of assembly, interacts with translational regulator CsrA and flagellin(s).

It localises to the cytoplasm. Its function is as follows. Acts as an anti-CsrA protein, binds CsrA and prevents it from repressing translation of its target genes, one of which is flagellin. Binds to flagellin and participates in the assembly of the flagellum. The chain is Flagellar assembly factor FliW from Borreliella burgdorferi (strain ATCC 35210 / DSM 4680 / CIP 102532 / B31) (Borrelia burgdorferi).